A 340-amino-acid polypeptide reads, in one-letter code: Probable serine acetyltransferase 5 (340 aa).

Composition is skewed to low complexity over residues 1–17 (MLVV…RVAA) and 54–64 (PAEVVPAFAPP). The tract at residues 1-67 (MLVVVARKSS…VPAFAPPESE (67 aa)) is disordered.

It belongs to the transferase hexapeptide repeat family. As to quaternary structure, homomultimer.

It carries out the reaction L-serine + acetyl-CoA = O-acetyl-L-serine + CoA. Its pathway is amino-acid biosynthesis; L-cysteine biosynthesis; L-cysteine from L-serine: step 1/2. In Oryza sativa subsp. japonica (Rice), this protein is Probable serine acetyltransferase 5 (SAT5).